We begin with the raw amino-acid sequence, 242 residues long: Guanylate kinase (242 aa).

In terms of domain architecture, Guanylate kinase-like spans 22–200 (GLLIVMTGAS…AVRELQAVQR (179 aa)). Residue 29–36 (GASGVGKG) coordinates ATP.

Belongs to the guanylate kinase family.

The protein resides in the cytoplasm. The catalysed reaction is GMP + ATP = GDP + ADP. Functionally, essential for recycling GMP and indirectly, cGMP. This chain is Guanylate kinase, found in Deinococcus geothermalis (strain DSM 11300 / CIP 105573 / AG-3a).